We begin with the raw amino-acid sequence, 1072 residues long: Teashirt homolog 3 (1072 aa).

Disordered stretches follow at residues 44–71, 130–153, and 228–247; these read ACPSYQNSPAAEFSSHEMDSESHISETS, PSSENNGGGSSSSSSSSSSSCGSG, and HYRDDNHETDNNNPKRWSKP. The segment covering 57-71 has biased composition (basic and acidic residues); the sequence is SSHEMDSESHISETS. 2 C2H2-type zinc fingers span residues 204-228 and 265-289; these read FRCKDCSAAYDTLVELTVHMNETGH and LKCMYCGHSFESLQDLSVHMIKTKH. Residues 228 to 237 show a composition bias toward basic and acidic residues; it reads HYRDDNHETD. Positions 315–336 are disordered; it reads SLELELPSSPDSTGGTPKATLS. Residues 376–400 form a C2H2-type 3; atypical zinc finger; it reads LKCMECGSSHDTLQELTAHMMVTGH. A compositionally biased stretch (basic and acidic residues) spans 469–481; that stretch reads AVLDEKPKEKEKA. Disordered stretches follow at residues 469 to 489, 569 to 594, 616 to 690, 784 to 815, and 846 to 888; these read AVLDEKPKEKEKASEEEEKYD, NSEIVSPTKTQTLVSPPSSQTSPMPK, EKMK…PLSG, TKGKSDKGCSLGSGLLSPTSTSPATSSSTVTT, and TESH…RQSN. Composition is skewed to polar residues over residues 571–593 and 649–660; these read EIVSPTKTQTLVSPPSSQTSPMP and SSGSGFKSQENS. Ser-672 is subject to Phosphoserine. 2 stretches are compositionally biased toward low complexity: residues 791–815 and 847–860; these read GCSLGSGLLSPTSTSPATSSSTVTT and ESHTSKSSTPSSIS. The homeobox; atypical DNA-binding region spans 882–952; the sequence is RKGRQSNWNP…NVKYQLRRTG (71 aa). C2H2-type zinc fingers lie at residues 967 to 989 and 1032 to 1055; these read FFCNDCASQIRTPSTYISHLESH and YQCKLCNRTFASKHAVKLHLSKTH.

It belongs to the teashirt C2H2-type zinc-finger protein family. In terms of assembly, interacts (via N-terminus) with HDAC1 and HDAC2; the interaction is direct. Found in a trimeric complex with APBB1 and HDAC1; the interaction between HDAC1 and APBB1 is mediated by TSHZ3. Interacts (via homeobox domain) with APBB1 (via PID domain 1). Expressed in cortical neurons.

It localises to the nucleus. The protein resides in the cell projection. The protein localises to the growth cone. Functionally, transcriptional regulator involved in developmental processes. Functions in association with APBB1, SET and HDAC factors as a transcriptional repressor, that inhibits the expression of CASP4. TSHZ3-mediated transcription repression involves the recruitment of histone deacetylases HDAC1 and HDAC2. Associates with chromatin in a region surrounding the CASP4 transcriptional start site(s). Regulates the development of neurons involved in both respiratory rhythm and airflow control. Promotes maintenance of nucleus ambiguus (nA) motoneurons, which govern upper airway function, and establishes a respiratory rhythm generator (RRG) activity compatible with survival at birth. Involved in the differentiation of the proximal uretic smooth muscle cells during developmental processes. Involved in the up-regulation of myocardin, that directs the expression of smooth muscle cells in the proximal ureter. Involved in the modulation of glutamatergic synaptic transmission and long-term synaptic potentiation. This chain is Teashirt homolog 3 (Tshz3), found in Rattus norvegicus (Rat).